The following is a 195-amino-acid chain: Translation initiation factor IF-3 (195 aa).

Residues 158–195 (EQSEVQQRPKREGRNMIMFLSPRKTPLIKKEEDAKENN) form a disordered region. The segment covering 185 to 195 (IKKEEDAKENN) has biased composition (basic and acidic residues).

This sequence belongs to the IF-3 family. Monomer.

The protein localises to the cytoplasm. Functionally, IF-3 binds to the 30S ribosomal subunit and shifts the equilibrium between 70S ribosomes and their 50S and 30S subunits in favor of the free subunits, thus enhancing the availability of 30S subunits on which protein synthesis initiation begins. The protein is Translation initiation factor IF-3 of Prochlorococcus marinus (strain MIT 9515).